The following is a 533-amino-acid chain: Spindle pole body protein CSA6 (533 aa).

Disordered regions lie at residues 1-32 and 53-130; these read MEDS…SDLT and DKYD…QEDE. Basic and acidic residues-rich tracts occupy residues 18–30 and 53–68; these read PEIK…KTSD and DKYD…DLTP. Positions 83–94 are enriched in low complexity; the sequence is PSKFSSSIPQKP. Polar residues predominate over residues 103–121; the sequence is SSPTKNYTDHINQLRSGPN. Residues 136–236 are a coiled coil; the sequence is KYEIKRLKQE…RSERDELVKD (101 aa). Residues 309-318 show a composition bias toward basic and acidic residues; that stretch reads EKDKPSEDKT. 2 disordered regions span residues 309–329 and 349–453; these read EKDK…SKDA and SANS…QSTK. Polar residues-rich tracts occupy residues 349–392 and 405–421; these read SANS…SNSQ and IYSS…QSSH. Residues 432–445 show a composition bias toward basic and acidic residues; it reads PRVERDHWTDRPPS.

It localises to the cytoplasm. The protein resides in the cytoskeleton. The protein localises to the microtubule organizing center. Its subcellular location is the spindle pole body. In terms of biological role, plays a role in mitotic spindle pole body organization, possibly at the point of spindle pole body separation. Required for mitotic exit. The chain is Spindle pole body protein CSA6 from Candida dubliniensis (strain CD36 / ATCC MYA-646 / CBS 7987 / NCPF 3949 / NRRL Y-17841) (Yeast).